The primary structure comprises 102 residues: Large ribosomal subunit protein bL21 (102 aa).

The protein belongs to the bacterial ribosomal protein bL21 family. As to quaternary structure, part of the 50S ribosomal subunit. Contacts protein L20.

In terms of biological role, this protein binds to 23S rRNA in the presence of protein L20. The protein is Large ribosomal subunit protein bL21 of Limosilactobacillus fermentum (strain NBRC 3956 / LMG 18251) (Lactobacillus fermentum).